The sequence spans 744 residues: 5-methyltetrahydropteroyltriglutamate--homocysteine methyltransferase (744 aa).

Residues 17–20 (REVK) and lysine 110 contribute to the 5-methyltetrahydropteroyltri-L-glutamate site. L-homocysteine is bound by residues 422 to 424 (IGS) and glutamate 475. L-methionine contacts are provided by residues 422 to 424 (IGS) and glutamate 475. Residue tryptophan 552 participates in 5-methyltetrahydropteroyltri-L-glutamate binding. Aspartate 590 serves as a coordination point for L-homocysteine. Aspartate 590 serves as a coordination point for L-methionine. A 5-methyltetrahydropteroyltri-L-glutamate-binding site is contributed by glutamate 596. Residues histidine 632, cysteine 634, and glutamate 656 each contribute to the Zn(2+) site. Histidine 685 acts as the Proton donor in catalysis. Cysteine 717 is a Zn(2+) binding site.

This sequence belongs to the vitamin-B12 independent methionine synthase family. It depends on Zn(2+) as a cofactor.

It catalyses the reaction 5-methyltetrahydropteroyltri-L-glutamate + L-homocysteine = tetrahydropteroyltri-L-glutamate + L-methionine. The protein operates within amino-acid biosynthesis; L-methionine biosynthesis via de novo pathway; L-methionine from L-homocysteine (MetE route): step 1/1. In terms of biological role, catalyzes the transfer of a methyl group from 5-methyltetrahydrofolate to homocysteine resulting in methionine formation. The polypeptide is 5-methyltetrahydropteroyltriglutamate--homocysteine methyltransferase (Trichodesmium erythraeum (strain IMS101)).